Here is a 312-residue protein sequence, read N- to C-terminus: Aspartate carbamoyltransferase catalytic subunit (312 aa).

Residues arginine 55 and threonine 56 each coordinate carbamoyl phosphate. Lysine 83 lines the L-aspartate pocket. Residues arginine 105, histidine 138, and glutamine 141 each contribute to the carbamoyl phosphate site. Arginine 171 and arginine 225 together coordinate L-aspartate. Glycine 266 and proline 267 together coordinate carbamoyl phosphate.

Belongs to the aspartate/ornithine carbamoyltransferase superfamily. ATCase family. In terms of assembly, heterododecamer (2C3:3R2) of six catalytic PyrB chains organized as two trimers (C3), and six regulatory PyrI chains organized as three dimers (R2).

It carries out the reaction carbamoyl phosphate + L-aspartate = N-carbamoyl-L-aspartate + phosphate + H(+). It functions in the pathway pyrimidine metabolism; UMP biosynthesis via de novo pathway; (S)-dihydroorotate from bicarbonate: step 2/3. In terms of biological role, catalyzes the condensation of carbamoyl phosphate and aspartate to form carbamoyl aspartate and inorganic phosphate, the committed step in the de novo pyrimidine nucleotide biosynthesis pathway. The sequence is that of Aspartate carbamoyltransferase catalytic subunit from Corynebacterium efficiens (strain DSM 44549 / YS-314 / AJ 12310 / JCM 11189 / NBRC 100395).